A 586-amino-acid polypeptide reads, in one-letter code: Lipoprotein LpqB (586 aa).

Positions 1–17 (MVRSVFALVFAAVLLGG) are cleaved as a signal peptide. Cys-18 carries the N-palmitoyl cysteine lipid modification. A lipid anchor (S-diacylglycerol cysteine) is attached at Cys-18. Residues 26–45 (APQAIGTVERPAPSNLPKPI) form a disordered region.

The protein belongs to the LpqB lipoprotein family.

It localises to the cell membrane. This chain is Lipoprotein LpqB, found in Mycobacterium ulcerans (strain Agy99).